Here is a 129-residue protein sequence, read N- to C-terminus: Keratin-associated protein 5-6 (129 aa).

Repeat copies occupy residues 28–31, 34–37, 40–43, 90–93, 109–112, and 119–122. A 6 X 4 AA repeats of C-C-X-P region spans residues 28-112; sequence CCVPICCCKP…SCCQSSCCKP (85 aa).

It belongs to the KRTAP type 5 family. As to quaternary structure, interacts with hair keratins. As to expression, expressed in hair root and not in skin. Expressed also in liver and skeletal muscle.

In terms of biological role, in the hair cortex, hair keratin intermediate filaments are embedded in an interfilamentous matrix, consisting of hair keratin-associated protein (KRTAP), which are essential for the formation of a rigid and resistant hair shaft through their extensive disulfide bond cross-linking with abundant cysteine residues of hair keratins. The matrix proteins include the high-sulfur and high-glycine-tyrosine keratins. This Homo sapiens (Human) protein is Keratin-associated protein 5-6 (KRTAP5-6).